The sequence spans 116 residues: Probable transcriptional regulator WhiB6 (116 aa).

[4Fe-4S] cluster contacts are provided by Cys-12, Cys-53, Cys-56, and Cys-62. The 54-residue stretch at 33–86 (VCTQDPDRWTTTPDDEAKTLCRACPRRWLCARDAVESAGAEGLWAGVVIPESGR) folds into the 4Fe-4S Wbl-type domain.

Belongs to the WhiB family. [4Fe-4S] cluster serves as cofactor. In terms of processing, the Fe-S cluster can be nitrosylated by nitric oxide (NO). Post-translationally, upon Fe-S cluster removal intramolecular disulfide bonds are formed.

The protein resides in the cytoplasm. Acts as a transcriptional regulator. Probably redox-responsive. The apo- but not holo-form probably binds DNA. The sequence is that of Probable transcriptional regulator WhiB6 (whiB6) from Mycobacterium tuberculosis (strain CDC 1551 / Oshkosh).